We begin with the raw amino-acid sequence, 419 residues long: UDP-N-acetylglucosamine 1-carboxyvinyltransferase (419 aa).

Phosphoenolpyruvate is bound at residue 22 to 23 (KN). Arg93 serves as a coordination point for UDP-N-acetyl-alpha-D-glucosamine. The active-site Proton donor is the Cys117. Cys117 is subject to 2-(S-cysteinyl)pyruvic acid O-phosphothioketal. UDP-N-acetyl-alpha-D-glucosamine contacts are provided by residues 122-126 (RPVDQ), Asp305, and Ile327.

Belongs to the EPSP synthase family. MurA subfamily.

It is found in the cytoplasm. The catalysed reaction is phosphoenolpyruvate + UDP-N-acetyl-alpha-D-glucosamine = UDP-N-acetyl-3-O-(1-carboxyvinyl)-alpha-D-glucosamine + phosphate. Its pathway is cell wall biogenesis; peptidoglycan biosynthesis. In terms of biological role, cell wall formation. Adds enolpyruvyl to UDP-N-acetylglucosamine. The chain is UDP-N-acetylglucosamine 1-carboxyvinyltransferase from Dichelobacter nodosus (strain VCS1703A).